Here is a 25-residue protein sequence, read N- to C-terminus: Caerin-1.5 (25 aa).

Leucine amide is present on L25.

Expressed by the skin parotoid and/or rostral glands.

Its subcellular location is the secreted. Functionally, antibacterial peptide, that adopts an alpha helical conformation which can disrupt bacterial membranes. Each caerin displays a different antimicrobial specificity. The polypeptide is Caerin-1.5 (Ranoidea caerulea (Green tree frog)).